Reading from the N-terminus, the 47-residue chain is Alpha-conotoxin VxXXC (47 aa).

A hydroxyproline; partial mark is found at Pro10, Pro21, and Pro29. 4 disulfides stabilise this stretch: Cys18-Cys27, Cys23-Cys35, Cys28-Cys45, and Cys33-Cys47.

Homodimer. Pseudo-homodimer (identical sequence, different post-translational modifications). In terms of processing, hydroxyPro-10 is only found in a minor form. Expressed by the venom duct.

The protein localises to the secreted. In terms of biological role, alpha-conotoxins act on postsynaptic membranes, they bind to the nicotinic acetylcholine receptors (nAChR) and thus inhibit them. Through its two C-terminal domains, this homodimeric protein would bind to two nAChR allosteric sites, located outside the nAChR C-loop of the principal binding face and at the adjacent binding interface in a clockwise direction. This toxin specifically blocks mammalian neuronal nAChR of the alpha-7/CHRNA7, alpha-3-beta-2/CHRNA3-CHRNB2 and alpha-4-beta-2/CHRNA4-CHRNB2 subtypes. VxXXA and VxXXB inhibit alpha-7/CHRNA7 and alpha-3-beta-2/CHRNA3-CHRNB2 nAChR more efficiently than VxXXC. VxXXB is the most effective at inhibiting alpha-4-beta-2/CHRNA4-CHRNB2 nAChR, followed by VxXXC and VxXXA. In Conus vexillum (Flag cone), this protein is Alpha-conotoxin VxXXC.